A 393-amino-acid chain; its full sequence is S-adenosylmethionine synthase (393 aa).

Glu-9 lines the Mg(2+) pocket. His-15 lines the ATP pocket. Glu-43 lines the K(+) pocket. L-methionine contacts are provided by Glu-56 and Gln-99. Residues 167 to 169 (DGK), 235 to 238 (SGRF), Asp-246, 252 to 253 (RK), Ala-269, Lys-273, and Lys-277 each bind ATP. Asp-246 serves as a coordination point for L-methionine. Lys-277 contributes to the L-methionine binding site.

Belongs to the AdoMet synthase family. As to quaternary structure, homotetramer. The cofactor is Mn(2+). Mg(2+) is required as a cofactor. Requires Co(2+) as cofactor. It depends on K(+) as a cofactor.

It is found in the cytoplasm. It carries out the reaction L-methionine + ATP + H2O = S-adenosyl-L-methionine + phosphate + diphosphate. The protein operates within amino-acid biosynthesis; S-adenosyl-L-methionine biosynthesis; S-adenosyl-L-methionine from L-methionine: step 1/1. Functionally, catalyzes the formation of S-adenosylmethionine from methionine and ATP. The reaction comprises two steps that are both catalyzed by the same enzyme: formation of S-adenosylmethionine (AdoMet) and triphosphate, and subsequent hydrolysis of the triphosphate. This is S-adenosylmethionine synthase (SAMS) from Brassica rapa subsp. pekinensis (Chinese cabbage).